Consider the following 828-residue polypeptide: Periplasmic nitrate reductase (828 aa).

A signal peptide (tat-type signal) is located at residues 1-31; the sequence is MKLSRRSFMKANAVAAAAAAAGLSVPGVARA. The 57-residue stretch at 39–95 folds into the 4Fe-4S Mo/W bis-MGD-type domain; it reads IKWDKAPCRFCGTGCGVLVGTQQGRVVACQGDPDAPVNRGLNCIKGYFLPKIMYGKD. [4Fe-4S] cluster is bound by residues Cys46, Cys49, Cys53, and Cys81. Residues Lys83, Gln150, Asn175, Cys179, 212 to 219, 243 to 247, 262 to 264, Met372, Gln376, Asn482, 508 to 509, Lys531, Asp558, and 718 to 727 each bind Mo-bis(molybdopterin guanine dinucleotide); these read WGSNMAEM, STFQH, QSD, SD, and TGRVLEHWHT. Phe794 contacts substrate. The Mo-bis(molybdopterin guanine dinucleotide) site is built by Asn802 and Lys819.

It belongs to the prokaryotic molybdopterin-containing oxidoreductase family. NasA/NapA/NarB subfamily. Component of the periplasmic nitrate reductase NapAB complex composed of NapA and NapB. [4Fe-4S] cluster is required as a cofactor. It depends on Mo-bis(molybdopterin guanine dinucleotide) as a cofactor. Post-translationally, predicted to be exported by the Tat system. The position of the signal peptide cleavage has not been experimentally proven.

The protein localises to the periplasm. It catalyses the reaction 2 Fe(II)-[cytochrome] + nitrate + 2 H(+) = 2 Fe(III)-[cytochrome] + nitrite + H2O. Its function is as follows. Catalytic subunit of the periplasmic nitrate reductase complex NapAB. Receives electrons from NapB and catalyzes the reduction of nitrate to nitrite. This is Periplasmic nitrate reductase from Salmonella paratyphi A (strain ATCC 9150 / SARB42).